The primary structure comprises 258 residues: Spindlin-2B (258 aa).

A compositionally biased stretch (low complexity) spans 1-23; sequence MKTPNAQEAEGQQTRAAAGRATG. The segment at 1–49 is disordered; the sequence is MKTPNAQEAEGQQTRAAAGRATGSANMTKKKVSQKKQRGRPSSQPRRNI. Positions 28–39 are enriched in basic residues; it reads TKKKVSQKKQRG. Tudor-like domain regions lie at residues 50-99, 129-178, and 210-255; these read VGCR…LELH, IGKA…YQLL, and IGKH…YDLV. 2 histone H3K4me3 and H3R8me2a binding regions span residues glutamate 138 and 246–248; that span reads DFH.

Belongs to the SPIN/STSY family. Interacts with C11orf84/SPINDOC. Detected in all the examined tissues with highest expression in liver, followed by heart, stomach, kidney, skeletal muscle, placenta, and pancreas.

The protein resides in the nucleus. In terms of biological role, involved in the regulation of cell cycle progression, this activity is related to the inhibition of apoptosis following the removal of essential growth factors. Exhibits H3K4me3-binding activity. The chain is Spindlin-2B (SPIN2B) from Homo sapiens (Human).